The chain runs to 140 residues: Smith-Magenis syndrome chromosomal region candidate gene 5 protein (140 aa).

The disordered stretch occupies residues 43-77 (CTGPSSQAPPQPPQASPPAAADHSRTPSLLASSHS). Residues 49–58 (QAPPQPPQAS) show a composition bias toward pro residues.

Widely expressed.

In Homo sapiens (Human), this protein is Smith-Magenis syndrome chromosomal region candidate gene 5 protein (SMCR5).